We begin with the raw amino-acid sequence, 251 residues long: Pantothenate synthetase (251 aa).

Residue Met28 to His35 coordinates ATP. The active-site Proton donor is the His35. Gln59 contributes to the (R)-pantoate binding site. Beta-alanine is bound at residue Gln59. Gly145–Asp148 is an ATP binding site. Residue Gln151 coordinates (R)-pantoate. ATP contacts are provided by residues Val174 and Lys182–Arg185.

Belongs to the pantothenate synthetase family. In terms of assembly, homodimer.

It is found in the cytoplasm. It carries out the reaction (R)-pantoate + beta-alanine + ATP = (R)-pantothenate + AMP + diphosphate + H(+). Its pathway is cofactor biosynthesis; (R)-pantothenate biosynthesis; (R)-pantothenate from (R)-pantoate and beta-alanine: step 1/1. Catalyzes the condensation of pantoate with beta-alanine in an ATP-dependent reaction via a pantoyl-adenylate intermediate. This chain is Pantothenate synthetase, found in Bdellovibrio bacteriovorus (strain ATCC 15356 / DSM 50701 / NCIMB 9529 / HD100).